Reading from the N-terminus, the 122-residue chain is Fluoride-specific ion channel FluC (122 aa).

The next 4 helical transmembrane spans lie at 5-25 (FLIG…SGII), 29-49 (FGIP…VGFL), 65-85 (FIIT…YESF), and 93-113 (FIKS…MIYF). Residues G72 and T75 each coordinate Na(+).

This sequence belongs to the fluoride channel Fluc/FEX (TC 1.A.43) family.

The protein localises to the cell membrane. It carries out the reaction fluoride(in) = fluoride(out). Its activity is regulated as follows. Na(+) is not transported, but it plays an essential structural role and its presence is essential for fluoride channel function. Functionally, fluoride-specific ion channel. Important for reducing fluoride concentration in the cell, thus reducing its toxicity. This Methanococcus vannielii (strain ATCC 35089 / DSM 1224 / JCM 13029 / OCM 148 / SB) protein is Fluoride-specific ion channel FluC.